The chain runs to 734 residues: Ribosomal RNA large subunit methyltransferase K/L (734 aa).

The region spanning 49 to 167 (HAYRICMWSR…KTEHTYCLDL (119 aa)) is the THUMP domain.

Belongs to the methyltransferase superfamily. RlmKL family.

The protein resides in the cytoplasm. The enzyme catalyses guanosine(2445) in 23S rRNA + S-adenosyl-L-methionine = N(2)-methylguanosine(2445) in 23S rRNA + S-adenosyl-L-homocysteine + H(+). The catalysed reaction is guanosine(2069) in 23S rRNA + S-adenosyl-L-methionine = N(2)-methylguanosine(2069) in 23S rRNA + S-adenosyl-L-homocysteine + H(+). Specifically methylates the guanine in position 2445 (m2G2445) and the guanine in position 2069 (m7G2069) of 23S rRNA. This is Ribosomal RNA large subunit methyltransferase K/L from Acinetobacter baumannii (strain SDF).